Consider the following 244-residue polypeptide: tRNA (guanine-N(7)-)-methyltransferase (244 aa).

Positions M1 to L11 are enriched in pro residues. The tract at residues M1 to R23 is disordered. Residues E74, E99, D126, and D149 each coordinate S-adenosyl-L-methionine. D149 is a catalytic residue. Substrate is bound by residues K153, D185, and T222–E225.

Belongs to the class I-like SAM-binding methyltransferase superfamily. TrmB family.

It catalyses the reaction guanosine(46) in tRNA + S-adenosyl-L-methionine = N(7)-methylguanosine(46) in tRNA + S-adenosyl-L-homocysteine. The protein operates within tRNA modification; N(7)-methylguanine-tRNA biosynthesis. In terms of biological role, catalyzes the formation of N(7)-methylguanine at position 46 (m7G46) in tRNA. In Pseudomonas syringae pv. tomato (strain ATCC BAA-871 / DC3000), this protein is tRNA (guanine-N(7)-)-methyltransferase.